Consider the following 1008-residue polypeptide: MHPGGAIGGELIFSRLGDIVTRWPWVVIGCWTLLALMLPMTVPSLTELTQRHPVVILPVDAPSSVAAKKISQAFHEVDSENVLIVLLTDDKGLGPADETVYRTLVDRLRNDTKDVVVLQDFLSTPPLHELLVSKDGKAWILPIVLAGELGTSASYQAYAGVAGIVKQTLESTAGSSLKANLTGPASTVADLTDAGARDRTSIELVIAVLLLTILMIIYRNPITMLLPLITIGASLMTAQAVVSGVSVLAGLAVSNQMIVLLSAMIAGAGTDYAVFLISRYHDYIRMGSGSAQDAGCAVRQALISLGKVIAASAATVGITFLGMSFTKIRVFSTVGPALAIGIAVAFLAAVTLMPALLVLAGTRGWVAPRRDRAGAFWRRTGVRIVRRPVAYLSASMVILIVLALCASLVRFNYDDRKQIPASDESSVGYAALESHFPVGQAIPEYLLIQSPHDLRTPRALADMAELAQRVSQIPGIALVRGVTRPTGKPLEETSATYQAGMVGKQLGSASHLIGESTGDLNRLASGAGLLADKLGDVRIQVGQAVAGISGLLDNLAFAQKMFGDSKTLGEIDTAGKLVSSMRALGNMFGINFSTTMNDINWVGAVVIALDSSVLCDTNPICADARAQFHKLLTASEDGTLDNIAHLWKQLGSTQSSQTIGATVSGLEKTLTAVNTSLRSLGLDNPNVMRSKMIGLQNGVNDLASAGRRIADGVAVLVDQTRTMGTSLARASAFLMEMGQDASQPSMAGFNVPPQLLNTEDFKKLVQAFISPDGHSVRYFIQTDLNPFSSAAMDQVNTILNVATGAQPNTTLSDASIYLSGYTVTLRDTRDYYDRDLQLIVIVTMIVVLLILMALLRSIVAPIYLVGSVIVSYLSALGLCVLVFQVLLRQQLHWSVPGLAFVVLVAVGADYNMLLASRLRDESSHGLRASVIRTVRSTGGVITAAGLIFAASMFGLLLSSIATVVQAGFVLGSGILLDTFIVRTITVPAVAALLRRASWWPARPWGNNA.

The next 12 membrane-spanning stretches (helical) occupy residues 23-43 (WPWV…MTVP), 202-222 (IELV…RNPI), 225-245 (LLPL…VSGV), 257-277 (MIVL…VFLI), 301-321 (ALIS…ITFL), 340-360 (IGIA…LVLA), 389-409 (VAYL…ASLV), 835-855 (DLQL…MALL), 862-882 (IYLV…CVLV), 895-915 (VPGL…MLLA), 940-960 (VITA…LSSI), and 961-981 (ATVV…TFIV).

The protein belongs to the resistance-nodulation-cell division (RND) (TC 2.A.6) family. MmpL subfamily.

The protein localises to the cell membrane. In Mycobacterium leprae (strain TN), this protein is Probable transport protein MmpL10 (mmpL10).